The primary structure comprises 227 residues: 2-C-methyl-D-erythritol 4-phosphate cytidylyltransferase (227 aa).

This sequence belongs to the IspD/TarI cytidylyltransferase family. IspD subfamily.

It catalyses the reaction 2-C-methyl-D-erythritol 4-phosphate + CTP + H(+) = 4-CDP-2-C-methyl-D-erythritol + diphosphate. The protein operates within isoprenoid biosynthesis; isopentenyl diphosphate biosynthesis via DXP pathway; isopentenyl diphosphate from 1-deoxy-D-xylulose 5-phosphate: step 2/6. In terms of biological role, catalyzes the formation of 4-diphosphocytidyl-2-C-methyl-D-erythritol from CTP and 2-C-methyl-D-erythritol 4-phosphate (MEP). The chain is 2-C-methyl-D-erythritol 4-phosphate cytidylyltransferase from Thermosipho melanesiensis (strain DSM 12029 / CIP 104789 / BI429).